Reading from the N-terminus, the 191-residue chain is Thymidine kinase (191 aa).

ATP contacts are provided by residues 15-22 and 88-91; these read GPMYSGKT and DEAQ. The Proton acceptor role is filled by E89. Zn(2+) contacts are provided by C145, C148, C183, and C186.

It belongs to the thymidine kinase family. Homotetramer.

The protein resides in the cytoplasm. The enzyme catalyses thymidine + ATP = dTMP + ADP + H(+). This chain is Thymidine kinase, found in Clostridium botulinum (strain Loch Maree / Type A3).